Reading from the N-terminus, the 765-residue chain is Ankyrin repeat and protein kinase domain-containing protein 1 (765 aa).

Residues 22–289 (EGDWRLVASG…DITIETDILL (268 aa)) enclose the Protein kinase domain. ATP-binding positions include 28-36 (VASGGFSQV) and K51. D145 acts as the Proton acceptor in catalysis. ANK repeat units lie at residues 361–390 (NKVTPLHFLVAQGSVEQVRLLLAHEVDVDC), 394–423 (SGYTPLLIAAQDQQPDLCALLLAHGADANR), 427–456 (DGWAPLHFAAQNGDDGTARLLLDHGACVDA), 460–489 (EGWTPLHLAAQNNFENVARLLVSRQADPNL), 493–522 (EGKTPLHVAAYFGHVSLVKLLTSQGAELDA), 526–555 (NLRTPLHLAVERGKVRAIQHLLKSGAVPDA), 559–588 (SGYGPLHTAAARGKYLICKMLLRYGASLEL), 592–621 (QGWTPLHLAAYKGHLEIIHLLAESHANMGA), 625–654 (VNWTPLHLAARHGEEAVVSALLQCGADPNA), 658–687 (SGWTPLHLAVQRSTFLSVINLLEHHANVHA), 691–720 (VGWTPAHLAALKGNTAILKVLVEAGAQLDV), and 724–753 (VSCTPLQLALRSRKQGIMSFLEGKEPSVAT).

It belongs to the protein kinase superfamily. TKL Ser/Thr protein kinase family. In terms of tissue distribution, highly expressed in brain and weakly expressed in placenta and spinal cord.

It carries out the reaction L-seryl-[protein] + ATP = O-phospho-L-seryl-[protein] + ADP + H(+). It catalyses the reaction L-threonyl-[protein] + ATP = O-phospho-L-threonyl-[protein] + ADP + H(+). The chain is Ankyrin repeat and protein kinase domain-containing protein 1 (ANKK1) from Homo sapiens (Human).